A 314-amino-acid chain; its full sequence is Coiled-coil domain-containing protein 42 like-2 (314 aa).

Coiled coils occupy residues Arg34–Leu133 and Asn175–Glu231.

The protein belongs to the CFAP73 family.

The sequence is that of Coiled-coil domain-containing protein 42 like-2 from Xenopus tropicalis (Western clawed frog).